Consider the following 90-residue polypeptide: Co-chaperonin GroES (90 aa).

This sequence belongs to the GroES chaperonin family. Heptamer of 7 subunits arranged in a ring. Interacts with the chaperonin GroEL.

Its subcellular location is the cytoplasm. Functionally, together with the chaperonin GroEL, plays an essential role in assisting protein folding. The GroEL-GroES system forms a nano-cage that allows encapsulation of the non-native substrate proteins and provides a physical environment optimized to promote and accelerate protein folding. GroES binds to the apical surface of the GroEL ring, thereby capping the opening of the GroEL channel. This chain is Co-chaperonin GroES, found in Bacteroides thetaiotaomicron (strain ATCC 29148 / DSM 2079 / JCM 5827 / CCUG 10774 / NCTC 10582 / VPI-5482 / E50).